Reading from the N-terminus, the 123-residue chain is U11/U12 small nuclear ribonucleoprotein 25 kDa protein (123 aa).

A Ubiquitin-like domain is found at Met-32–Lys-123.

In terms of assembly, component of the U11/U12 snRNPs that are part of the U12-type spliceosome.

The protein localises to the nucleus. This chain is U11/U12 small nuclear ribonucleoprotein 25 kDa protein (Snrnp25), found in Mus musculus (Mouse).